Here is a 314-residue protein sequence, read N- to C-terminus: Homoserine O-acetyltransferase (314 aa).

Residue Cys-142 is the Acyl-thioester intermediate of the active site. Positions 163 and 192 each coordinate substrate. Residue His-235 is the Proton acceptor of the active site. Glu-237 is a catalytic residue. A substrate-binding site is contributed by Arg-249.

This sequence belongs to the MetA family.

The protein resides in the cytoplasm. The enzyme catalyses L-homoserine + acetyl-CoA = O-acetyl-L-homoserine + CoA. It participates in amino-acid biosynthesis; L-methionine biosynthesis via de novo pathway; O-acetyl-L-homoserine from L-homoserine: step 1/1. Functionally, transfers an acetyl group from acetyl-CoA to L-homoserine, forming acetyl-L-homoserine. This chain is Homoserine O-acetyltransferase, found in Streptococcus thermophilus (strain ATCC BAA-250 / LMG 18311).